The primary structure comprises 359 residues: Endoglucanase 1 (359 aa).

2 disordered regions span residues 1 to 26 (MENPRTTPTPTPLRRRRSERRARGGR) and 47 to 72 (TGASPSPAPPASPAPSADSGTADAGT). The span at 13-24 (LRRRRSERRARG) shows a compositional bias: basic residues. Low complexity predominate over residues 60-72 (APSADSGTADAGT). Residue aspartate 154 is part of the active site. Cysteine 155 and cysteine 199 form a disulfide bridge. Aspartate 192 (proton donor) is an active-site residue. Catalysis depends on aspartate 339, which acts as the Nucleophile.

Belongs to the glycosyl hydrolase 6 (cellulase B) family.

It carries out the reaction Endohydrolysis of (1-&gt;4)-beta-D-glucosidic linkages in cellulose, lichenin and cereal beta-D-glucans.. In terms of biological role, CMCase I preferentially hydrolyzes carboxymethyl cellulose (CMC). The protein is Endoglucanase 1 (casA) of Streptomyces sp. (strain KSM-9).